The sequence spans 530 residues: TNF receptor-associated factor family protein DDB_G0272829 (530 aa).

Residues 35-81 (CQICEGLLISSLIPNRMKALQCINGHCFCLTCWESILEIKSECPTCR) form an RING-type; degenerate zinc finger. 2 TRAF-type zinc fingers span residues 134-188 (RHES…KQMQ) and 189-246 (GHIL…NDND). Disordered regions lie at residues 242 to 267 (NNDNDNNDSDENNSNQSLSSSSLSSS), 391 to 432 (TTTT…DNQG), and 483 to 530 (FNQL…GTSL). Low complexity-rich tracts occupy residues 253-267 (NNSNQSLSSSSLSSS), 391-415 (TTTTTSTSDKNNNNNNNNNNNNNNN), and 485-502 (QLSQPQTQPQSQSQSQSL). Residues 361–422 (ILEHQQQQNQ…NNNNEDEEDD (62 aa)) are a coiled coil. A compositionally biased stretch (polar residues) spans 509–530 (ITINQNQNTPSNPFSIFSGTSL).

The protein belongs to the TNF receptor-associated factor family.

It is found in the cytoplasm. Its function is as follows. Probable adapter protein and signal transducer that links members of the tumor necrosis factor receptor family to different signaling pathways by association with the receptor cytoplasmic domain and kinases. The chain is TNF receptor-associated factor family protein DDB_G0272829 from Dictyostelium discoideum (Social amoeba).